Here is a 106-residue protein sequence, read N- to C-terminus: Large ribosomal subunit protein uL24 (106 aa).

This sequence belongs to the universal ribosomal protein uL24 family. As to quaternary structure, part of the 50S ribosomal subunit.

Functionally, one of two assembly initiator proteins, it binds directly to the 5'-end of the 23S rRNA, where it nucleates assembly of the 50S subunit. Its function is as follows. One of the proteins that surrounds the polypeptide exit tunnel on the outside of the subunit. The chain is Large ribosomal subunit protein uL24 from Clostridium acetobutylicum (strain ATCC 824 / DSM 792 / JCM 1419 / IAM 19013 / LMG 5710 / NBRC 13948 / NRRL B-527 / VKM B-1787 / 2291 / W).